Reading from the N-terminus, the 309-residue chain is Protein FdhE homolog (309 aa).

The protein belongs to the FdhE family.

The protein resides in the cytoplasm. Necessary for formate dehydrogenase activity. The chain is Protein FdhE homolog from Klebsiella pneumoniae (strain 342).